A 221-amino-acid polypeptide reads, in one-letter code: GTP-binding nuclear protein Ran-1 (221 aa).

Positions 10 to 174 constitute a Small GTPase Ran-type domain; that stretch reads DYPSFKLVIV…LYLARKLAGD (165 aa). 21–28 contributes to the GTP binding site; it reads DGGTGKTT. Residues 40-48 are switch-I; sequence KKYEPTIGV. Residues glycine 71, 125 to 128, and 153 to 155 each bind GTP; these read NKVD and SAK. The tract at residues 71-87 is switch-II; that stretch reads GQEKFGGLRDGYYIHGQ.

Belongs to the small GTPase superfamily. Ran family. As to quaternary structure, found in a nuclear export complex with RanGTP, exportin and pre-miRNA.

The protein resides in the nucleus. GTP-binding protein involved in nucleocytoplasmic transport. Required for the import of protein into the nucleus and also for RNA export. Involved in chromatin condensation and control of cell cycle. The polypeptide is GTP-binding nuclear protein Ran-1 (RAN1) (Oryza sativa subsp. indica (Rice)).